The chain runs to 689 residues: Glycine--tRNA ligase beta subunit (689 aa).

It belongs to the class-II aminoacyl-tRNA synthetase family. In terms of assembly, tetramer of two alpha and two beta subunits.

The protein localises to the cytoplasm. The enzyme catalyses tRNA(Gly) + glycine + ATP = glycyl-tRNA(Gly) + AMP + diphosphate. This Edwardsiella ictaluri (strain 93-146) protein is Glycine--tRNA ligase beta subunit.